We begin with the raw amino-acid sequence, 160 residues long: SsrA-binding protein (160 aa).

Belongs to the SmpB family.

The protein localises to the cytoplasm. Functionally, required for rescue of stalled ribosomes mediated by trans-translation. Binds to transfer-messenger RNA (tmRNA), required for stable association of tmRNA with ribosomes. tmRNA and SmpB together mimic tRNA shape, replacing the anticodon stem-loop with SmpB. tmRNA is encoded by the ssrA gene; the 2 termini fold to resemble tRNA(Ala) and it encodes a 'tag peptide', a short internal open reading frame. During trans-translation Ala-aminoacylated tmRNA acts like a tRNA, entering the A-site of stalled ribosomes, displacing the stalled mRNA. The ribosome then switches to translate the ORF on the tmRNA; the nascent peptide is terminated with the 'tag peptide' encoded by the tmRNA and targeted for degradation. The ribosome is freed to recommence translation, which seems to be the essential function of trans-translation. This chain is SsrA-binding protein, found in Proteus mirabilis (strain HI4320).